A 203-amino-acid chain; its full sequence is High frequency lysogenization protein HflD homolog (203 aa).

Belongs to the HflD family.

The protein localises to the cytoplasm. It is found in the cell inner membrane. The sequence is that of High frequency lysogenization protein HflD homolog from Histophilus somni (strain 2336) (Haemophilus somnus).